Here is a 191-residue protein sequence, read N- to C-terminus: Cell division protein SepF (191 aa).

Positions 156 to 167 are enriched in polar residues; that stretch reads EEASPSNMSNKG. Residues 156-191 form a disordered region; sequence EEASPSNMSNKGNDLISKETSPAPEPAWGETVATAL.

This sequence belongs to the SepF family. Homodimer. Interacts with FtsZ.

The protein localises to the cytoplasm. In terms of biological role, cell division protein that is part of the divisome complex and is recruited early to the Z-ring. Probably stimulates Z-ring formation, perhaps through the cross-linking of FtsZ protofilaments. Its function overlaps with FtsA. The sequence is that of Cell division protein SepF from Prochlorococcus marinus (strain NATL2A).